We begin with the raw amino-acid sequence, 267 residues long: NH(3)-dependent NAD(+) synthetase (267 aa).

38-45 (GISGGVDS) serves as a coordination point for ATP. Aspartate 44 is a binding site for Mg(2+). Arginine 123 is a binding site for deamido-NAD(+). Residue threonine 143 coordinates ATP. Mg(2+) is bound at residue glutamate 148. The deamido-NAD(+) site is built by lysine 156 and aspartate 163. Lysine 172 and serine 193 together coordinate ATP. 250–251 (HK) provides a ligand contact to deamido-NAD(+).

This sequence belongs to the NAD synthetase family. Homodimer.

The catalysed reaction is deamido-NAD(+) + NH4(+) + ATP = AMP + diphosphate + NAD(+) + H(+). Its pathway is cofactor biosynthesis; NAD(+) biosynthesis; NAD(+) from deamido-NAD(+) (ammonia route): step 1/1. In terms of biological role, catalyzes the ATP-dependent amidation of deamido-NAD to form NAD. Uses ammonia as a nitrogen source. In Pyrobaculum aerophilum (strain ATCC 51768 / DSM 7523 / JCM 9630 / CIP 104966 / NBRC 100827 / IM2), this protein is NH(3)-dependent NAD(+) synthetase.